The primary structure comprises 244 residues: Methylthioribulose-1-phosphate dehydratase (244 aa).

Cys-89 is a binding site for substrate. Zn(2+) contacts are provided by His-107 and His-109. Glu-130 (proton donor/acceptor) is an active-site residue. Residue His-192 participates in Zn(2+) binding.

The protein belongs to the aldolase class II family. MtnB subfamily. Zn(2+) serves as cofactor.

The protein resides in the cytoplasm. It catalyses the reaction 5-(methylsulfanyl)-D-ribulose 1-phosphate = 5-methylsulfanyl-2,3-dioxopentyl phosphate + H2O. Its pathway is amino-acid biosynthesis; L-methionine biosynthesis via salvage pathway; L-methionine from S-methyl-5-thio-alpha-D-ribose 1-phosphate: step 2/6. Functionally, catalyzes the dehydration of methylthioribulose-1-phosphate (MTRu-1-P) into 2,3-diketo-5-methylthiopentyl-1-phosphate (DK-MTP-1-P). This is Methylthioribulose-1-phosphate dehydratase from Saccharomyces cerevisiae (strain YJM789) (Baker's yeast).